The sequence spans 246 residues: Probable 2-phosphosulfolactate phosphatase (246 aa).

It belongs to the ComB family. The cofactor is Mg(2+).

The catalysed reaction is (2R)-O-phospho-3-sulfolactate + H2O = (2R)-3-sulfolactate + phosphate. The protein is Probable 2-phosphosulfolactate phosphatase of Nostoc punctiforme (strain ATCC 29133 / PCC 73102).